Reading from the N-terminus, the 229-residue chain is tRNA (guanine-N(1)-)-methyltransferase (229 aa).

Residues G109 and 129–134 each bind S-adenosyl-L-methionine; that span reads IGDFIL.

This sequence belongs to the RNA methyltransferase TrmD family. Homodimer.

The protein resides in the cytoplasm. It carries out the reaction guanosine(37) in tRNA + S-adenosyl-L-methionine = N(1)-methylguanosine(37) in tRNA + S-adenosyl-L-homocysteine + H(+). Specifically methylates guanosine-37 in various tRNAs. The polypeptide is tRNA (guanine-N(1)-)-methyltransferase (Helicobacter pylori (strain Shi470)).